Consider the following 782-residue polypeptide: Nucleolar RNA helicase 2 (782 aa).

Positions 1-184 (MPGKLRSASK…IPVEQKEGAF (184 aa)) are disordered. Phosphoserine occurs at positions 7 and 13. Composition is skewed to basic and acidic residues over residues 26–42 (PSEK…KTDE) and 99–117 (EPLE…KAEE). At K39 the chain carries N6-acetyllysine. Residue K114 forms a Glycyl lysine isopeptide (Lys-Gly) (interchain with G-Cter in SUMO1); alternate linkage. K114 participates in a covalent cross-link: Glycyl lysine isopeptide (Lys-Gly) (interchain with G-Cter in SUMO2); alternate. S119 carries the phosphoserine modification. A compositionally biased stretch (basic and acidic residues) spans 134 to 143 (GKEANGDVGE). K135 is subject to N6-acetyllysine. 2 positions are modified to phosphoserine: S145 and S169. Residues 172-181 (EKEIPVEQKE) show a composition bias toward basic and acidic residues. The Q motif motif lies at 182 to 210 (GAFSNFPISEETVKLLKARGVNFLFPIQA). In terms of domain architecture, Helicase ATP-binding spans 213-392 (FHHVYSGKDL…KKYMKSTYEQ (180 aa)). 226-233 (ARTGTGKT) contributes to the ATP binding site. Residue T292 is modified to Phosphothreonine. The short motif at 335–338 (DEVD) is the DEAD box element. A Helicase C-terminal domain is found at 425–569 (DVIRVYSGHQ…GVPSATEIIK (145 aa)). The residue at position 563 (S563) is a Phosphoserine. K596 is modified (N6-acetyllysine). Residues 704–782 (ATEQPELEGP…KRSFSKAFGQ (79 aa)) form a disordered region. A run of 3 repeats spans residues 720–724 (GRGQR), 731–735 (FRGQR), and 741–747 (FRGQGQR). The segment at 720 to 747 (GRGQRDGSRGSFRGQRGGSRNFRGQGQR) is 3 X 5 AA repeats. The segment covering 728-756 (RGSFRGQRGGSRNFRGQGQRGGSRNFRGQ) has biased composition (low complexity). K778 carries the post-translational modification N6-acetyllysine.

The protein belongs to the DEAD box helicase family. DDX21/DDX50 subfamily. In terms of assembly, homodimer; homodimerizes via its N-terminus. Found in a multi-helicase-TICAM1 complex at least composed of DHX36, DDX1, DDX21 and TICAM1; this complex exists in resting cells with or without poly(I:C) RNA ligand stimulation. Interacts (via C-terminus) with TICAM1 (via TIR domain). Interacts with DHX36 (via C-terminus); this interaction serves as bridges to TICAM1. Interacts (via C-terminus) with DDX1 (via B30.2/SPRY domain); this interaction serves as bridges to TICAM1. Component of the B-WICH complex, at least composed of SMARCA5/SNF2H, BAZ1B/WSTF, SF3B1, DEK, MYO1C, ERCC6, MYBBP1A and DDX21. Interacts with C1QBP. Interacts with JUN. Interacts with WDR46. Interacts with MCM3AP. Interacts with WDR43. Interacts with KPNA3. Interacts with GID4. Post-translationally, acetylation by CREBBP/CBP inhibits the helicase activity. Deacetylation by SIRT7 promotes the helicase activity and overcomes R-loop-mediated stalling of RNA polymerases.

It is found in the nucleus. It localises to the nucleolus. Its subcellular location is the nucleoplasm. The protein localises to the cytoplasm. The protein resides in the cytosol. It is found in the mitochondrion. It carries out the reaction ATP + H2O = ADP + phosphate + H(+). Its activity is regulated as follows. Acetylation inhibits the helicase activity. In terms of biological role, RNA helicase that acts as a sensor of the transcriptional status of both RNA polymerase (Pol) I and II: promotes ribosomal RNA (rRNA) processing and transcription from polymerase II (Pol II). Binds various RNAs, such as rRNAs, snoRNAs, 7SK and, at lower extent, mRNAs. In the nucleolus, localizes to rDNA locus, where it directly binds rRNAs and snoRNAs, and promotes rRNA transcription, processing and modification. Required for rRNA 2'-O-methylation, possibly by promoting the recruitment of late-acting snoRNAs SNORD56 and SNORD58 with pre-ribosomal complexes. In the nucleoplasm, binds 7SK RNA and is recruited to the promoters of Pol II-transcribed genes: acts by facilitating the release of P-TEFb from inhibitory 7SK snRNP in a manner that is dependent on its helicase activity, thereby promoting transcription of its target genes. Functions as a cofactor for JUN-activated transcription: required for phosphorylation of JUN at 'Ser-77'. Can unwind double-stranded RNA (helicase) and can fold or introduce a secondary structure to a single-stranded RNA (foldase). Together with SIRT7, required to prevent R-loop-associated DNA damage and transcription-associated genomic instability: deacetylation by SIRT7 activates the helicase activity, thereby overcoming R-loop-mediated stalling of RNA polymerases. Involved in rRNA processing. May bind to specific miRNA hairpins. Component of a multi-helicase-TICAM1 complex that acts as a cytoplasmic sensor of viral double-stranded RNA (dsRNA) and plays a role in the activation of a cascade of antiviral responses including the induction of pro-inflammatory cytokines via the adapter molecule TICAM1. The sequence is that of Nucleolar RNA helicase 2 (Ddx21) from Rattus norvegicus (Rat).